Consider the following 445-residue polypeptide: D-serine transporter DsdX (445 aa).

At 1 to 4 (MHSQ) the chain is on the cytoplasmic side. Residues 5–25 (IWVVSTLLISIVLIVLTIVKF) traverse the membrane as a helical segment. Topologically, residues 26–28 (KFH) are periplasmic. A helical transmembrane segment spans residues 29–49 (PFLALLLASFFVGTMMGMGPL). The Cytoplasmic portion of the chain corresponds to 50-56 (DMVNAIE). The helical transmembrane segment at 57–77 (SGIGGTLGFLAAVIGLGTILG) threads the bilayer. At 78–105 (KMMEVSGAAERIGLTLQRCRWLSVDVIM) the chain is on the periplasmic side. The helical transmembrane segment at 106–126 (VLVGLICGITLFVEVGVVLLI) threads the bilayer. At 127–139 (PLAFSIAKKTNTS) the chain is on the cytoplasmic side. A helical membrane pass occupies residues 140 to 160 (LLKLAIPLCTALMAVHCVVPP). At 161 to 177 (HPAALYVANKLGADIGS) the chain is on the periplasmic side. A helical membrane pass occupies residues 178-198 (VIVYGLLVGLMASLIGGPLFL). At 199 to 223 (KFLGQRLPFKPVPTEFADLKVRDEK) the chain is on the cytoplasmic side. The helical transmembrane segment at 224 to 244 (TLPSLGATLFTILLPIALMLV) threads the bilayer. The Periplasmic portion of the chain corresponds to 245 to 257 (KTIAELNMARESG). The helical transmembrane segment at 258 to 278 (LYILVEFIGNPITAMFIAVFV) threads the bilayer. Over 279 to 301 (AYYVLGIRQHMSMGTMLTHTENG) the chain is Cytoplasmic. A helical transmembrane segment spans residues 302-322 (FGSIANILLIIGAGGAFNAIL). Over 323 to 342 (KSSSLADTLAVILSNMHMHP) the chain is Periplasmic. The next 3 membrane-spanning stretches (helical) occupy residues 343 to 363 (ILLA…ATVA), 364 to 384 (MMGA…ISPE), and 385 to 405 (IIAI…DSLF). Over 406-424 (WLVKQYCGATLNETFKYYT) the chain is Cytoplasmic. Residues 425–445 (TATFIASVVALAGTFLLSFII) form a helical membrane-spanning segment.

The protein belongs to the GntP permease family.

It is found in the cell inner membrane. Functionally, a D-serine-specific transporter, may function as a H(+) symporter. This is D-serine transporter DsdX from Escherichia coli (strain K12).